A 772-amino-acid polypeptide reads, in one-letter code: Transducin-like enhancer protein 4 (772 aa).

2 disordered regions span residues 1–24 and 183–359; these read MIRD…PAQP and LPIK…LTGL. Residues 1 to 137 are q domain; sequence MIRDLSKMYP…AIIGQQLQAQ (137 aa). Residues 138-205 are GP domain; it reads HLSHAHGLPV…HQRDRDSIKS (68 aa). Positions 184–203 are enriched in basic and acidic residues; that stretch reads PIKDEKKHHDSDHQRDRDSI. A compositionally biased stretch (low complexity) spans 204 to 213; it reads KSSSVSPSAS. The interval 206–275 is ccN domain; it reads SSVSPSASFR…SPRGSPAHSP (70 aa). Basic and acidic residues-rich tracts occupy residues 216 to 253 and 274 to 290; these read AAEK…KSDD and SPRE…KKDA. An SP domain region spans residues 276 to 452; it reads RENGLDKPRL…GGKPAYSFHV (177 aa). Positions 291–306 are enriched in low complexity; the sequence is PISPASIASSSSTPSS. Basic and acidic residues predominate over residues 307-316; sequence KSKEHSHNEK. A compositionally biased stretch (polar residues) spans 318 to 329; it reads TTPVSKSNTPTP. 7 WD repeats span residues 484–522, 530–569, 574–613, 616–655, 657–696, 698–737, and 739–772; these read NHGE…NKSP, NRDN…PRIK, SSAP…LVRQ, GHTD…QLQQ, DFTS…KYQL, LHES…SIFQ, and KESS…EVIY.

This sequence belongs to the WD repeat Groucho/TLE family. Interacts with tcf7, tcf7l1, ripply2.2/bowline, dscr6/ripply3 and foxd3. Associates with tbx6 in the presence of ripply2.2/bowline. Interacts with EFNB1 through the SP domain. Ubiquitinated by XIAP/BIRC4. As to expression, expressed at high levels in the spleen and ovary.

Its subcellular location is the nucleus. Its function is as follows. Transcriptional corepressor. Functions with ripply2.2/bowline to down regulate transcription of tbx6-dependent gene expression. Represses transcription of siamois and nodal3. The polypeptide is Transducin-like enhancer protein 4 (tle4) (Xenopus laevis (African clawed frog)).